The primary structure comprises 130 residues: Small ribosomal subunit protein uS9 (130 aa).

The protein belongs to the universal ribosomal protein uS9 family.

In Bacillus anthracis (strain A0248), this protein is Small ribosomal subunit protein uS9.